The chain runs to 229 residues: 3-dehydroquinate dehydratase (229 aa).

Residues 29-31 (ELR) and arginine 56 each bind 3-dehydroquinate. Histidine 120 serves as the catalytic Proton donor/acceptor. Lysine 146 acts as the Schiff-base intermediate with substrate in catalysis. 3 residues coordinate 3-dehydroquinate: arginine 187, threonine 208, and glutamine 212.

This sequence belongs to the type-I 3-dehydroquinase family. As to quaternary structure, homodimer.

It catalyses the reaction 3-dehydroquinate = 3-dehydroshikimate + H2O. The protein operates within metabolic intermediate biosynthesis; chorismate biosynthesis; chorismate from D-erythrose 4-phosphate and phosphoenolpyruvate: step 3/7. Its function is as follows. Involved in the third step of the chorismate pathway, which leads to the biosynthesis of aromatic amino acids. Catalyzes the cis-dehydration of 3-dehydroquinate (DHQ) and introduces the first double bond of the aromatic ring to yield 3-dehydroshikimate. The sequence is that of 3-dehydroquinate dehydratase from Haloarcula marismortui (strain ATCC 43049 / DSM 3752 / JCM 8966 / VKM B-1809) (Halobacterium marismortui).